Reading from the N-terminus, the 232-residue chain is Enolase-phosphatase E1 (232 aa).

This sequence belongs to the HAD-like hydrolase superfamily. MasA/MtnC family. As to quaternary structure, monomer. Requires Mg(2+) as cofactor.

It carries out the reaction 5-methylsulfanyl-2,3-dioxopentyl phosphate + H2O = 1,2-dihydroxy-5-(methylsulfanyl)pent-1-en-3-one + phosphate. The protein operates within amino-acid biosynthesis; L-methionine biosynthesis via salvage pathway; L-methionine from S-methyl-5-thio-alpha-D-ribose 1-phosphate: step 3/6. Its pathway is amino-acid biosynthesis; L-methionine biosynthesis via salvage pathway; L-methionine from S-methyl-5-thio-alpha-D-ribose 1-phosphate: step 4/6. Its function is as follows. Bifunctional enzyme that catalyzes the enolization of 2,3-diketo-5-methylthiopentyl-1-phosphate (DK-MTP-1-P) into the intermediate 2-hydroxy-3-keto-5-methylthiopentenyl-1-phosphate (HK-MTPenyl-1-P), which is then dephosphorylated to form the acireductone 1,2-dihydroxy-3-keto-5-methylthiopentene (DHK-MTPene). The protein is Enolase-phosphatase E1 of Xanthomonas euvesicatoria pv. vesicatoria (strain 85-10) (Xanthomonas campestris pv. vesicatoria).